Reading from the N-terminus, the 495-residue chain is Prenylcysteine oxidase 1-like (495 aa).

The signal sequence occupies residues 1–22 (MARAAPLLAVLATVLTTAAAGG). N-linked (GlcNAc...) asparagine glycans are attached at residues Asn185 and Asn343.

It belongs to the prenylcysteine oxidase family. FAD is required as a cofactor.

It localises to the secreted. Functionally, likely to have oxidoreductase activity. Required in the mevalonate pathway to regulate prenylation and enhances the bactericidal activity of neutrophils. This is Prenylcysteine oxidase 1-like (Pcyox1l) from Mus musculus (Mouse).